A 242-amino-acid polypeptide reads, in one-letter code: N-glycosylase/DNA lyase (242 aa).

Q25, S52, and W63 together coordinate 8-oxoguanine. The tract at residues 119–183 (KSYYRDMNRL…VDARIERITR (65 aa)) is helix-hairpin-helix. K143 functions as the Schiff-base intermediate with DNA in the catalytic mechanism. F147 and P173 together coordinate 8-oxoguanine. D175 is a catalytic residue. Residues D209 and W213 each contribute to the 8-oxoguanine site.

Belongs to the archaeal N-glycosylase/DNA lyase (AGOG) family.

The enzyme catalyses 2'-deoxyribonucleotide-(2'-deoxyribose 5'-phosphate)-2'-deoxyribonucleotide-DNA = a 3'-end 2'-deoxyribonucleotide-(2,3-dehydro-2,3-deoxyribose 5'-phosphate)-DNA + a 5'-end 5'-phospho-2'-deoxyribonucleoside-DNA + H(+). In terms of biological role, DNA repair enzyme that is part of the base excision repair (BER) pathway; protects from oxidative damage by removing the major product of DNA oxidation, 8-oxoguanine (GO), from single- and double-stranded DNA substrates. This chain is N-glycosylase/DNA lyase, found in Methanopyrus kandleri (strain AV19 / DSM 6324 / JCM 9639 / NBRC 100938).